The sequence spans 168 residues: Protein OPG162 (168 aa).

The chain crosses the membrane as a helical span at residues Leu15–His37. Disulfide bonds link Cys75-Cys162 and Cys141-Cys154. An N-linked (GlcNAc...) asparagine; by host glycan is attached at Asn133.

The protein belongs to the orthopoxvirus OPG162 protein family. Interacts with protein OPG161. Interacts with protein OPG164. Interacts with protein OPG190.

The protein resides in the virion membrane. Its subcellular location is the host Golgi apparatus. Its function is as follows. Forms a complex with OPG162 and OPG190 to coordinate the incorporation of OPG164 into wrapped enveloped virion (EV) membranes and, subsequently, the production of actin tails. Therefore plays an essential role in efficient cell-to-cell spread of viral particles. The sequence is that of Protein OPG162 (OPG162) from Monkeypox virus.